The sequence spans 371 residues: Chaperone protein DnaJ (371 aa).

The region spanning 5–69 (EFYDRLGVSK…QKRAAYDQYG (65 aa)) is the J domain. The CR-type zinc finger occupies 127 to 209 (GAEKEVSYNR…CHGTGHEKKT (83 aa)). Residues Cys-140, Cys-143, Cys-157, Cys-160, Cys-183, Cys-186, Cys-197, and Cys-200 each contribute to the Zn(2+) site. 4 CXXCXGXG motif repeats span residues 140–147 (CHTCSGSG), 157–164 (CQKCHGSG), 183–190 (CDVCQGSG), and 197–204 (CPTCHGTG).

Belongs to the DnaJ family. Homodimer. It depends on Zn(2+) as a cofactor.

Its subcellular location is the cytoplasm. Its function is as follows. Participates actively in the response to hyperosmotic and heat shock by preventing the aggregation of stress-denatured proteins and by disaggregating proteins, also in an autonomous, DnaK-independent fashion. Unfolded proteins bind initially to DnaJ; upon interaction with the DnaJ-bound protein, DnaK hydrolyzes its bound ATP, resulting in the formation of a stable complex. GrpE releases ADP from DnaK; ATP binding to DnaK triggers the release of the substrate protein, thus completing the reaction cycle. Several rounds of ATP-dependent interactions between DnaJ, DnaK and GrpE are required for fully efficient folding. Also involved, together with DnaK and GrpE, in the DNA replication of plasmids through activation of initiation proteins. In Streptococcus agalactiae serotype Ia (strain ATCC 27591 / A909 / CDC SS700), this protein is Chaperone protein DnaJ.